Reading from the N-terminus, the 202-residue chain is Protein Thf1 (202 aa).

A coiled-coil region spans residues 174–202 (IYKSSILKMEQAKELLQEAKIKDKKEKKK).

Belongs to the THF1 family.

Its function is as follows. May be involved in photosynthetic membrane biogenesis. The polypeptide is Protein Thf1 (Prochlorococcus marinus subsp. pastoris (strain CCMP1986 / NIES-2087 / MED4)).